Consider the following 121-residue polypeptide: Large ribosomal subunit protein uL14 (121 aa).

It belongs to the universal ribosomal protein uL14 family. Part of the 50S ribosomal subunit. Forms a cluster with proteins L3 and L19. In the 70S ribosome, L14 and L19 interact and together make contacts with the 16S rRNA in bridges B5 and B8.

Its function is as follows. Binds to 23S rRNA. Forms part of two intersubunit bridges in the 70S ribosome. This chain is Large ribosomal subunit protein uL14, found in Aquifex aeolicus (strain VF5).